The following is a 634-amino-acid chain: MSETATQNKETRGFQSEVKQLLHLMIHSLYSNKEIFLRELISNASDAADKLRFQALSNGDLYQGDADLGVKLSFNAEANTLTISDNGIGMSRDNVIEHLGTIAKSGTADFFSKLSEDQSKDSQLIGQFGVGFYSAFIVADAVTVRTRAAGLANDQAVQWHSAGEGDYTIEDITKESRGTDIILHMREDGKEFLNEWRLREVIGKYSDHIGIPVSIFTAVKDDEGKDTEEKHWEQINKAQALWTRNKSDIEKEEYQEFYKHVSHDFADPLTWSHNKVEGKNDYTSLLYIPAKAPWDMMNRDHKSGLKLYVQRVFIMDDAEQFMPSYMRFVRGLIDSNDLPLNVSREILQDNKVTQSLRGACTKRVLTMLERMAKNDNDKYLEFWKEFGLVLKEGPAEDMANKEKIAGLLRFSSTEVDSSEQTIGLASYVERMKEGQDKIYYLTADSYAAAKNSPHLEQFKAKGIEVVLMYDRIDEYVMNYLTDFDGKQFQSITKAGLDLSKFEGEEEKEKQKETEEEFKSVVERTQSYLGGRVKEVRTTFKLATTPAVVVTDDFEMGTQMAKLLEAAGQAAPEVKYIFEINPEHALVKQMADEADEQAFGRWVELLLGQAMLAEKGSMEDPSQFLGAINELLTKR.

An a; substrate-binding region spans residues 1-344; the sequence is MSETATQNKE…SNDLPLNVSR (344 aa). A b region spans residues 345–561; it reads EILQDNKVTQ…DFEMGTQMAK (217 aa). The interval 562-634 is c; that stretch reads LLEAAGQAAP…GAINELLTKR (73 aa).

It belongs to the heat shock protein 90 family. In terms of assembly, homodimer.

Its subcellular location is the cytoplasm. Functionally, molecular chaperone. Has ATPase activity. The sequence is that of Chaperone protein HtpG from Vibrio atlanticus (strain LGP32) (Vibrio splendidus (strain Mel32)).